We begin with the raw amino-acid sequence, 103 residues long: Protein IQ-DOMAIN 20 (103 aa).

The calmodulin-binding stretch occupies residues 10 to 22 (VVRRKLLRRSQSR). IQ domains follow at residues 36–62 (EEIAAVKIQAFFRGHLARRAFKALKSL) and 63–87 (VKLQAVARGVLVRRQARIALHCMHA).

This sequence belongs to the IQD family. As to quaternary structure, interacts with calmodulin (CaM and CML) at the plasma membrane in a calcium ion Ca(2+)- independent manner, however, Ca(2+) seems to modulate calmodulin binding. Binds to multiple calmodulin (CaM) in the presence of Ca(2+) and CaM-like proteins.

The protein resides in the nucleus. Its subcellular location is the nucleolus. It is found in the cell membrane. In terms of biological role, may be involved in cooperative interactions with calmodulins or calmodulin-like proteins. Recruits calmodulin proteins to microtubules, thus being a potential scaffold in cellular signaling and trafficking. May associate with nucleic acids and regulate gene expression at the transcriptional or post-transcriptional level. The sequence is that of Protein IQ-DOMAIN 20 from Arabidopsis thaliana (Mouse-ear cress).